A 550-amino-acid polypeptide reads, in one-letter code: Chaperonin GroEL (550 aa).

ATP is bound by residues T30–P33, K51, D87–T91, G415, and D496. The disordered stretch occupies residues P526–Y550. The span at G537–Y550 shows a compositional bias: gly residues.

It belongs to the chaperonin (HSP60) family. As to quaternary structure, forms a cylinder of 14 subunits composed of two heptameric rings stacked back-to-back. Interacts with the co-chaperonin GroES.

It is found in the cytoplasm. It catalyses the reaction ATP + H2O + a folded polypeptide = ADP + phosphate + an unfolded polypeptide.. In terms of biological role, together with its co-chaperonin GroES, plays an essential role in assisting protein folding. The GroEL-GroES system forms a nano-cage that allows encapsulation of the non-native substrate proteins and provides a physical environment optimized to promote and accelerate protein folding. The chain is Chaperonin GroEL from Chloroherpeton thalassium (strain ATCC 35110 / GB-78).